A 355-amino-acid chain; its full sequence is Guanine nucleotide-binding protein G(i) subunit alpha (355 aa).

A lipid anchor (N-myristoyl glycine) is attached at Gly-2. Cys-3 carries S-palmitoyl cysteine lipidation. In terms of domain architecture, G-alpha spans 33–355 (REVKLLLLGA…KNNLKDCGLF (323 aa)). The interval 36 to 49 (KLLLLGAGESGKST) is G1 motif. GTP contacts are provided by residues 41-48 (GAGESGKS), 176-182 (LRTRVKT), 201-205 (DVGGQ), 270-273 (NKKD), and Ala-327. The Mg(2+) site is built by Ser-48 and Thr-182. The segment at 174-182 (DVLRTRVKT) is G2 motif. The G3 motif stretch occupies residues 197 to 206 (FKLFDVGGQR). Residues 266–273 (ILFLNKKD) form a G4 motif region. The tract at residues 325 to 330 (TCATDT) is G5 motif.

It belongs to the G-alpha family. G(i/o/t/z) subfamily. As to quaternary structure, g proteins are composed of 3 units; alpha, beta and gamma. The alpha chain contains the guanine nucleotide binding site.

Its function is as follows. Guanine nucleotide-binding proteins (G proteins) are involved as modulators or transducers in various transmembrane signaling systems. The chain is Guanine nucleotide-binding protein G(i) subunit alpha from Homarus americanus (American lobster).